Here is a 153-residue protein sequence, read N- to C-terminus: uncharacterized protein (153 aa).

A signal peptide spans 1 to 22 (MKAFNKLFSLVVASVLVFSLAG). C23 carries N-palmitoyl cysteine lipidation. The S-diacylglycerol cysteine moiety is linked to residue C23.

To L.monocytogenes lmo0207.

Its subcellular location is the cell membrane. This is an uncharacterized protein from Escherichia coli (strain K12).